A 37-amino-acid chain; its full sequence is Large ribosomal subunit protein bL36c (37 aa).

This sequence belongs to the bacterial ribosomal protein bL36 family.

It is found in the plastid. The protein localises to the chloroplast. The chain is Large ribosomal subunit protein bL36c from Chaetosphaeridium globosum (Charophycean green alga).